We begin with the raw amino-acid sequence, 331 residues long: Adenosine deaminase (331 aa).

Zn(2+)-binding residues include His12 and His14. Residues His14, Asp16, and Gly170 each coordinate substrate. His197 serves as a coordination point for Zn(2+). The active-site Proton donor is the Glu200. Asp278 lines the Zn(2+) pocket. Residue Asp279 participates in substrate binding.

Belongs to the metallo-dependent hydrolases superfamily. Adenosine and AMP deaminases family. Adenosine deaminase subfamily. It depends on Zn(2+) as a cofactor.

The catalysed reaction is adenosine + H2O + H(+) = inosine + NH4(+). It catalyses the reaction 2'-deoxyadenosine + H2O + H(+) = 2'-deoxyinosine + NH4(+). Its function is as follows. Catalyzes the hydrolytic deamination of adenosine and 2-deoxyadenosine. The protein is Adenosine deaminase of Shewanella denitrificans (strain OS217 / ATCC BAA-1090 / DSM 15013).